Here is a 185-residue protein sequence, read N- to C-terminus: MIKDILNKADEKMNKTVDVLVKELASMKAGRANPAILDKIEVEYYGAMTPISQLAGISIPEARILAIQPWDKSALKSIEKAILKSDLGINPSNDGEIIRLIIPELTEETRKNIVKNIKKTGEDSKVAIRGIRRECNDKFKALKKKNDISEDEIKKGEEQIQKKTDIFIKNIDAILEKKEKEIMSL.

This sequence belongs to the RRF family.

Its subcellular location is the cytoplasm. Responsible for the release of ribosomes from messenger RNA at the termination of protein biosynthesis. May increase the efficiency of translation by recycling ribosomes from one round of translation to another. The sequence is that of Ribosome-recycling factor from Clostridium kluyveri (strain NBRC 12016).